We begin with the raw amino-acid sequence, 393 residues long: CCA-adding enzyme (393 aa).

ATP-binding residues include G27 and R30. CTP is bound by residues G27 and R30. Residues D40 and D42 each coordinate Mg(2+). ATP-binding residues include R111, D154, R157, R160, and R163. Residues R111, D154, R157, R160, and R163 each coordinate CTP.

It belongs to the tRNA nucleotidyltransferase/poly(A) polymerase family. Bacterial CCA-adding enzyme type 3 subfamily. In terms of assembly, homodimer. Requires Mg(2+) as cofactor.

The enzyme catalyses a tRNA precursor + 2 CTP + ATP = a tRNA with a 3' CCA end + 3 diphosphate. It carries out the reaction a tRNA with a 3' CCA end + 2 CTP + ATP = a tRNA with a 3' CCACCA end + 3 diphosphate. In terms of biological role, catalyzes the addition and repair of the essential 3'-terminal CCA sequence in tRNAs without using a nucleic acid template. Adds these three nucleotides in the order of C, C, and A to the tRNA nucleotide-73, using CTP and ATP as substrates and producing inorganic pyrophosphate. tRNA 3'-terminal CCA addition is required both for tRNA processing and repair. Also involved in tRNA surveillance by mediating tandem CCA addition to generate a CCACCA at the 3' terminus of unstable tRNAs. While stable tRNAs receive only 3'-terminal CCA, unstable tRNAs are marked with CCACCA and rapidly degraded. The sequence is that of CCA-adding enzyme from Listeria monocytogenes serotype 4a (strain HCC23).